The primary structure comprises 574 residues: Man(5)GlcNAc(2)-PP-dolichol translocation protein RFT1 (574 aa).

The Lumenal portion of the chain corresponds to 1 to 24 (MAKKNSQLPSTSEQILERSTTGAT). A helical membrane pass occupies residues 25–45 (FLMMGQLFTKLVTFILNNLLI). Residues 46–48 (RFL) lie on the Cytoplasmic side of the membrane. A helical membrane pass occupies residues 49–69 (SPRIFGITAFLEFIQGTVLFF). Residues 70–110 (SRDAIRLSTLRISDSGNGIIDDDDEEEYQETHYKSKVLQTA) lie on the Lumenal side of the membrane. A helical transmembrane segment spans residues 111–131 (VNFAYIPFWIGFPLSIGLIAW). Over 132–148 (QYRNINAYFITLPFFRW) the chain is Cytoplasmic. The chain crosses the membrane as a helical span at residues 149–169 (SIFLIWLSIIVELLSEPFFIV). The Lumenal segment spans residues 170–181 (NQFMLNYAARSR). A helical membrane pass occupies residues 182 to 202 (FESIAVTTGCIVNFIVVYAVQ). The Cytoplasmic portion of the chain corresponds to 203 to 218 (QSRYPMGVVTSDIDKE). Residues 219 to 239 (GIAILAFALGKLAHSITLLAC) traverse the membrane as a helical segment. Topologically, residues 240 to 319 (YYWDYLKNFK…INSLCTVEEQ (80 aa)) are lumenal. A helical membrane pass occupies residues 320 to 340 (GIYALLSNYGSLLTRLLFAPI). Residues 341–372 (EESLRLFLARLLSSHNPKNLKLSIEVLVNLTR) lie on the Cytoplasmic side of the membrane. The helical transmembrane segment at 373–393 (FYIYLSLMIIVFGPANSSFLL) threads the bilayer. Residues 394–413 (QFLIGSKWSTTSVLDTIRVY) are Lumenal-facing. A helical transmembrane segment spans residues 414-434 (CFYIPFLSLNGIFEAFFQSVA). Residues 435–443 (TGDQILKHS) lie on the Cytoplasmic side of the membrane. Residues 444–464 (YFMMAFSGIFLLNSWLLIEKL) form a helical membrane-spanning segment. At 465-469 (KLSIE) the chain is on the lumenal side. A helical transmembrane segment spans residues 470 to 490 (GLILSNIINMVLRILYCGVFL). The Cytoplasmic segment spans residues 491–509 (NKFHRELFTDSSFFFNFKD). The helical transmembrane segment at 510-530 (FKTVIIAGSTICLLDWWFIGY) threads the bilayer. The Lumenal portion of the chain corresponds to 531-532 (VK). The helical transmembrane segment at 533-553 (NLQQFVVNVLFAMGLLALILV) threads the bilayer. Over 554–574 (KERQTIQSFINKRAVSNSKDV) the chain is Cytoplasmic.

It belongs to the RFT1 family.

Its subcellular location is the endoplasmic reticulum membrane. Its pathway is protein modification; protein glycosylation. Intramembrane glycolipid transporter that operates in the biosynthetic pathway of dolichol-linked oligosaccharides, the glycan precursors employed in protein asparagine (N)-glycosylation. The sequential addition of sugars to dolichol pyrophosphate produces dolichol-linked oligosaccharides containing fourteen sugars, including two GlcNAcs, nine mannoses and three glucoses. Once assembled, the oligosaccharide is transferred from the lipid to nascent proteins by oligosaccharyltransferases. The assembly of dolichol-linked oligosaccharides begins on the cytosolic side of the endoplasmic reticulum membrane and finishes in its lumen. RFT1 could mediate the translocation of the cytosolically oriented intermediate DolPP-GlcNAc2Man5, produced by ALG11, into the ER lumen where dolichol-linked oligosaccharides assembly continues. However, the intramembrane lipid transporter activity could not be confirmed in vitro. The chain is Man(5)GlcNAc(2)-PP-dolichol translocation protein RFT1 from Saccharomyces cerevisiae (strain ATCC 204508 / S288c) (Baker's yeast).